The primary structure comprises 33 residues: Brevinin-2 (33 aa).

Cys-27 and Cys-33 are oxidised to a cystine.

The protein belongs to the frog skin active peptide (FSAP) family. Brevinin subfamily. Expressed by the skin glands.

It localises to the secreted. Shows antibacterial activity against representative Gram-negative and Gram-positive bacterial species, and a very high hemolytic activity. The chain is Brevinin-2 from Pelophylax porosus brevipodus (Nagoya Daruma pond frog).